A 214-amino-acid polypeptide reads, in one-letter code: Putative AgrB-like protein 2 (214 aa).

5 helical membrane-spanning segments follow: residues 41-61, 83-103, 109-129, 154-174, and 179-199; these read IISVLILGLVFNIALEALIFL, TLLGIIISICIGFLIKSSFFA, LVVFIGIVIFVFGYFIVFKFA, ILTIYLFIEVLSIILYYNSGW, and PVMLSIIFGVAWQCMTLTYIG.

Belongs to the AgrB family.

The protein localises to the cell membrane. In terms of biological role, may be involved in the proteolytic processing of a quorum sensing system signal molecule precursor. The sequence is that of Putative AgrB-like protein 2 from Clostridium perfringens (strain 13 / Type A).